The primary structure comprises 604 residues: ERAD-associated E3 ubiquitin-protein ligase component HRD3B (604 aa).

The first 25 residues, 1 to 25 (MRVSGQSIIAISLFTLSLYIHRVQA), serve as a signal peptide directing secretion. Positions 48–69 (ESSDFDEFGESEPKSEEELDPG) are disordered. N-linked (GlcNAc...) asparagine glycans are attached at residues N78 and N105. 7 Sel1-like repeats span residues 125–160 (PHAQSVMGFVYGIGMMRETSRSKSILHHHFAAAGGN), 244–274 (VAMHKIGLFYYFGLRGLRRDHAKALYWFSKA), 279–307 (LGYLYVKGYGVDKRNYTKAREYFEMAANN), 311–344 (SGHYNLGVLYLKGTGVKKDVRHATKYFFVAANAG), 346–380 (PKAFYQLAKMFHTGVGLTKNLEMATTFYKLVAERG), 464–492 (AALLIGDAYYYGRGTERDFVRAAEAYMYA), and 498–528 (AQAMFNLGYMHEHGEGLPFDLHLAKRYYDQA). The N-linked (GlcNAc...) asparagine glycan is linked to N293.

It belongs to the sel-1 family.

Functionally, may be involved in the endoplasmic reticulum (ER) quality control system called ER-associated degradation (ERAD). This Arabidopsis thaliana (Mouse-ear cress) protein is ERAD-associated E3 ubiquitin-protein ligase component HRD3B.